The chain runs to 213 residues: Triosephosphate isomerase (213 aa).

A substrate-binding site is contributed by Asn7 to Lys9. Residue His88 is the Electrophile of the active site. Residue Glu136 is the Proton acceptor of the active site. The substrate site is built by Ile141 and Gly174.

The protein belongs to the triosephosphate isomerase family. In terms of assembly, homotetramer; dimer of dimers.

The protein resides in the cytoplasm. It carries out the reaction D-glyceraldehyde 3-phosphate = dihydroxyacetone phosphate. The protein operates within carbohydrate biosynthesis; gluconeogenesis. It participates in carbohydrate degradation; glycolysis; D-glyceraldehyde 3-phosphate from glycerone phosphate: step 1/1. Involved in the gluconeogenesis. Catalyzes stereospecifically the conversion of dihydroxyacetone phosphate (DHAP) to D-glyceraldehyde-3-phosphate (G3P). The sequence is that of Triosephosphate isomerase from Thermoplasma volcanium (strain ATCC 51530 / DSM 4299 / JCM 9571 / NBRC 15438 / GSS1).